The sequence spans 132 residues: Small ribosomal subunit protein uS8 (132 aa).

The protein belongs to the universal ribosomal protein uS8 family. In terms of assembly, part of the 30S ribosomal subunit. Contacts proteins S5 and S12.

In terms of biological role, one of the primary rRNA binding proteins, it binds directly to 16S rRNA central domain where it helps coordinate assembly of the platform of the 30S subunit. The protein is Small ribosomal subunit protein uS8 of Clostridioides difficile (strain 630) (Peptoclostridium difficile).